Reading from the N-terminus, the 225-residue chain is Small ribosomal subunit protein uS3 (225 aa).

Residues 16 to 85 (VCEYVVKETE…TPQIEVKDVK (70 aa)) form the KH type-2 domain. Positions 202-225 (EVGTESKADQTDVEGRETGNAEES) are disordered. Positions 205–225 (TESKADQTDVEGRETGNAEES) are enriched in basic and acidic residues.

This sequence belongs to the universal ribosomal protein uS3 family. As to quaternary structure, part of the 30S ribosomal subunit.

Its function is as follows. Binds the lower part of the 30S subunit head. The polypeptide is Small ribosomal subunit protein uS3 (Thermoplasma acidophilum (strain ATCC 25905 / DSM 1728 / JCM 9062 / NBRC 15155 / AMRC-C165)).